Consider the following 207-residue polypeptide: Probable GTP-binding protein EngB (207 aa).

Residues 22–193 enclose the EngB-type G domain; it reads RVPEIVFAGR…LAHFDHYLSG (172 aa). Residues 30 to 37, 57 to 61, 75 to 78, 142 to 145, and 172 to 174 contribute to the GTP site; these read GRSNVGKS, GKTRL, DIPG, TKDD, and YSS. Mg(2+) contacts are provided by Ser-37 and Thr-59.

This sequence belongs to the TRAFAC class TrmE-Era-EngA-EngB-Septin-like GTPase superfamily. EngB GTPase family. Mg(2+) serves as cofactor.

Necessary for normal cell division and for the maintenance of normal septation. The chain is Probable GTP-binding protein EngB from Chlorobium luteolum (strain DSM 273 / BCRC 81028 / 2530) (Pelodictyon luteolum).